The chain runs to 217 residues: Kunitz-type trypsin inhibitor-like 2 protein (217 aa).

An N-terminal signal peptide occupies residues 1-26 (MKPLSPLTLSFLLFVFITTLSLAFSN). 2 disulfide bridges follow: Cys70-Cys115 and Cys168-Cys175. N-linked (GlcNAc...) asparagine glycosylation is present at Asn191.

The protein belongs to the protease inhibitor I3 (leguminous Kunitz-type inhibitor) family.

The protein resides in the secreted. Functionally, might act as a protease inhibitor involved in plant defense responses. This chain is Kunitz-type trypsin inhibitor-like 2 protein (PIP20-2), found in Pisum sativum (Garden pea).